We begin with the raw amino-acid sequence, 87 residues long: Type 3 secretion system needle filament protein (87 aa).

It belongs to the SctF family. The core secretion machinery of the T3SS is composed of approximately 20 different proteins, including cytoplasmic components, a base, an export apparatus and a needle. This subunit polymerizes and forms the helical needle filament. In Y.enterocolitica E40, the needles are composed of 139 (plus-minus 19) YscF/SctF subunits.

Its subcellular location is the secreted. The protein resides in the cell surface. Its activity is regulated as follows. The secretion and/or polymerization may be controlled by the type III secretion system regulator YopR. Functionally, component of the type III secretion system (T3SS), also called injectisome, which is used to inject bacterial effector proteins into eukaryotic host cells. YscF/SctF forms the external needle filament that protrudes from the bacterial surface. The needle is not sufficient by itself for the formation of a pore allowing translocation of the Yop effectors across the host cell membrane. In Yersinia enterocolitica, this protein is Type 3 secretion system needle filament protein.